A 593-amino-acid chain; its full sequence is MESSADNTVPKQAESVFIREILENPLMPNLPPELAEIAKFVSFEGNVKPSIPVNWRLAESISALKAFEATFLNYLAHRKYGVRPSNVSINTDHATLFLMSPMLTQIEDRGEVRPFSPFDTLTAELFPNRDKHRANASLQRALITNIYKTKDGRFYHTHGGMNPEPTLQALGLPVEGEVQDTSEVVTDRIQQRLSKYDATHLDHLLNEEHRQAGTIVYSSAEYFASEHGQKNGKVGLYEVIRDPNSSQPAAWWPDHPNAPSSPKRPLAGLKVVDLTRAIAGPTITRSLAEMGASVMRVTSPDITDMSVLHQDLNWGKWNSWLRLDVESDRQKLRDLILDADVVVDSYRPGVMKRFGFGYDEVFNLVRDRSRGIIYVRENCYGWYGPWSHRSGWQQISDACCGISTSYGHAMGLEEPVTPALFNSDYCTGICGSTAVLDALVQRAEKGGSYRVDVSINYYNQWLVRSVGTYDEHTWTDLFRRHDAPVFRHYHSMQYMLPKLLTALYKFDGEILFQREFFGPFRSGALNTTFIQVRPIARFKDDAIELKYNVGTRGNGVDAPTWPADLRREIVRDEDEQGSGFRSGSGLGSGSIAD.

The segment at 572–593 (DEDEQGSGFRSGSGLGSGSIAD) is disordered. A compositionally biased stretch (gly residues) spans 580–593 (FRSGSGLGSGSIAD).

Belongs to the CoA-transferase III family.

The protein operates within secondary metabolite biosynthesis. In terms of biological role, acetyl-coenzyme A transferase; part of the gene cluster that mediates the biosynthesis of the indole diterpenes nodulisporic acids (NA). Nodulisporic acid A (NAA) and its chemically modified derivatives are of particular significance because of their highly potent insecticidal activity against blood-feeding arthropods and lack of observable adverse effects on mammals, in particular the tremogenicity associated with the paspaline-derived IDTs is not observed. The geranylgeranyl diphosphate (GGPP) synthase ggs1, localized outside of the cluster, is proposed to catalyze the first step in nodulisporic acid biosynthesis via conversion of farnesyl pyrophosphate and isopentyl pyrophosphate into geranylgeranyl pyrophosphate (GGPP). Condensation of indole-3-glycerol phosphate with GGPP by the prenyl transferase nodC then forms 3-geranylgeranylindole (3-GGI). Epoxidation by the FAD-dependent monooxygenase nodM leads to a single-epoxidized-GGI that is substrate of the terpene cyclase nodB for cyclization to yield emindole SB. The terminal methyl carbon, C28, of emindole SB is then oxidized by the cytochrome P450 monooxygenase nodW to produce nodulisporic acid F (NAF), the pentacyclic core of NAA. NAF is converted to nodulisporic acid E (NAE) via prenylation. This step is probably performed by one of the indole diterpene prenyltransferases nodD1 or nodD2. Several oxidation steps performed by the FAD-linked oxidoreductase nodO and one of the cytochrome P450 monooxygenase nodR, nodX or nodZ further convert NAE to nodulisporic acid D (NAD). NAD is substrate of cytochrome P450 monooxygenase nodJ to produce the precursor of nodulisporic acid C (NAC), converted to NAC by one of the indole diterpene prenyltransferases nodD1 or nodD2. The FAD-dependent monooxygenase nodY2 then oxidizes NAC to nodulisporic acid B (NAB). Finally NAB is converted to NAA by one of the cytochrome P450 monooxygenases nodR, nodX or nodZ. In Hypoxylon pulicicidum, this protein is Acetyl-coenzyme A transferase nodX.